Reading from the N-terminus, the 135-residue chain is UPF0355 protein SAV0387 (135 aa).

Belongs to the UPF0355 family.

The sequence is that of UPF0355 protein SAV0387 from Staphylococcus aureus (strain Mu50 / ATCC 700699).